The chain runs to 1135 residues: Exportin-6-A (1135 aa).

Residues 31-97 (IESLLNNFAQ…RNSLPKLLLS (67 aa)) form the Importin N-terminal domain.

This sequence belongs to the exportin family. Expressed during meiotic maturation 2 hours after germinal vesicle break down (GVBD) and in unfertilized and fertilized eggs, but not in oocytes (at protein level). Expressed in somatic cells, in oocytes, during meiotic maturation and in unfertilized and fertilized eggs.

It is found in the nucleus. The protein localises to the cytoplasm. Its function is as follows. Mediates the nuclear export of actin and profilin-actin complexes in somatic cells. Oocyte nuclei lack active actin export. This Xenopus laevis (African clawed frog) protein is Exportin-6-A (xpo6-a).